The following is a 487-amino-acid chain: Protein translocase subunit SecY (487 aa).

Residues 1 to 20 (MSWKDTAEPLLVRMPAVQRP) lie on the Cytoplasmic side of the membrane. A helical membrane pass occupies residues 21-47 (EGHVPFKRKLTWTGGVLLLYFFLTNVK). Residues 48 to 59 (LFGLDIDASQQV) are Extracellular-facing. Positions 60–67 (FGRFSSIL) form an intramembrane region, helical. Residues 60–88 (FGRFSSILASGQGSIMQLGIGPIVTASIV) traverse the membrane as a discontinuously helical segment. Residues 68-79 (ASGQGSIMQLGI) lie within the membrane without spanning it. Residues 80 to 88 (GPIVTASIV) constitute an intramembrane region (helical). At 89–110 (LQLLGGADLLGLNTQDDPRDQI) the chain is on the cytoplasmic side. A helical membrane pass occupies residues 111–135 (LYQGLQKLLVLVMICLTGLPMVFAG). At 136 to 153 (GFLPADTAVANSLGIGTA) the chain is on the extracellular side. Residues 154-178 (GVQWLIFAQMFVGGVLILFMDEVIS) traverse the membrane as a helical segment. Topologically, residues 179–184 (KWGVGS) are cytoplasmic. A helical transmembrane segment spans residues 185 to 203 (GIGLFIVAGVSQRLVGGLL). The Extracellular segment spans residues 204 to 244 (TAPFLGNSEGIIYTWYLFITGERGTGPVLAADGLQTVLLQG). The helical transmembrane segment at 245-266 (ELLGLFTTVLIFAVVVYAESVR) threads the bilayer. The Cytoplasmic portion of the chain corresponds to 267-291 (VEIPLSNARVKGARGRFPVKLIYAS). Residues 292-313 (VLPMILVRALQANIQFLGRILN) form a helical membrane-spanning segment. Over 314–364 (AQLGSMPAFLGTYANGQPTGGLFYFLAPIQSRGDWMWWLEGTAQPVWQILT) the chain is Extracellular. Residues 365–384 (RVGIDLFVMLVGGAVFAVFW) form a helical membrane-spanning segment. Topologically, residues 385–427 (VETTDMGPEATAKQIHNSGMQIPGFRQNVGVIEKVLERYIPQV) are cytoplasmic. The chain crosses the membrane as a helical span at residues 428-446 (TVIGGALVGLLAVMANMLG). At 447-451 (TIGGV) the chain is on the extracellular side. The chain crosses the membrane as a helical span at residues 452–466 (SGTGLLLTVSITYKL). Over 467–487 (YEEIAEEQLMEMHPMMRQMFG) the chain is Cytoplasmic.

It belongs to the SecY/SEC61-alpha family. As to quaternary structure, component of the Sec protein translocase complex. Heterotrimer consisting of alpha (SecY), beta (SecG) and gamma (SecE) subunits. The heterotrimers can form oligomers, although 1 heterotrimer is thought to be able to translocate proteins. Interacts with the ribosome. May interact with SecDF, and other proteins may be involved.

It is found in the cell membrane. The central subunit of the protein translocation channel SecYEG. Consists of two halves formed by TMs 1-5 and 6-10. These two domains form a lateral gate at the front which open onto the bilayer between TMs 2 and 7, and are clamped together by SecE at the back. The channel is closed by both a pore ring composed of hydrophobic SecY resides and a short helix (helix 2A) on the extracellular side of the membrane which forms a plug. The plug probably moves laterally to allow the channel to open. The ring and the pore may move independently. This Haloarcula marismortui (strain ATCC 43049 / DSM 3752 / JCM 8966 / VKM B-1809) (Halobacterium marismortui) protein is Protein translocase subunit SecY.